Here is a 780-residue protein sequence, read N- to C-terminus: ATP-dependent 6-phosphofructokinase, muscle type (780 aa).

Position 2 is an N-acetylthreonine (Thr2). The N-terminal catalytic PFK domain 1 stretch occupies residues 2-390; that stretch reads THEEHHAAKT…NWEVYKLLAH (389 aa). ATP-binding positions include Gly25, 88–89, and 118–121; these read RC and GDGS. Asp119 lines the Mg(2+) pocket. The residue at position 133 (Ser133) is a Phosphoserine. Residues 164-166, Arg201, 208-210, Glu264, Arg292, and 298-301 contribute to the substrate site; these read SID, MGR, and HVQR. Catalysis depends on Asp166, which acts as the Proton acceptor. Ser377 carries the post-translational modification Phosphoserine. The interdomain linker stretch occupies residues 391 to 401; it reads IRPPVSKSGSH. The interval 402 to 780 is C-terminal regulatory PFK domain 2; the sequence is TVAVMNVGAP…SRKRSGEAPA (379 aa). Beta-D-fructose 2,6-bisphosphate is bound by residues Arg471 and 528–532; that span reads TVSNN. Residue Ser530 is glycosylated (O-linked (GlcNAc) serine). Position 557 is an N6-(2-hydroxyisobutyryl)lysine (Lys557). Residues Arg566, 573–575, Glu629, Arg655, and 661–664 contribute to the beta-D-fructose 2,6-bisphosphate site; these read MGG and HMQQ. Ser667 is modified (phosphoserine). Arg735 is a binding site for beta-D-fructose 2,6-bisphosphate. Phosphoserine is present on Ser775.

The protein belongs to the phosphofructokinase type A (PFKA) family. ATP-dependent PFK group I subfamily. Eukaryotic two domain clade 'E' sub-subfamily. In terms of assembly, homo- and heterotetramers. Phosphofructokinase (PFK) enzyme functions as a tetramer composed of different combinations of 3 types of subunits, called PFKM (M), PFKL (L) and PFKP (P). The composition of the PFK tetramer differs according to the tissue type it is present in. The kinetic and regulatory properties of the tetrameric enzyme are dependent on the subunit composition, hence can vary across tissues. Interacts (via C-terminus) with HK1 (via N-terminal spermatogenic cell-specific region). Requires Mg(2+) as cofactor. Post-translationally, glcNAcylation decreases enzyme activity.

Its subcellular location is the cytoplasm. The catalysed reaction is beta-D-fructose 6-phosphate + ATP = beta-D-fructose 1,6-bisphosphate + ADP + H(+). The protein operates within carbohydrate degradation; glycolysis; D-glyceraldehyde 3-phosphate and glycerone phosphate from D-glucose: step 3/4. Allosterically activated by ADP, AMP, or fructose 2,6-bisphosphate, and allosterically inhibited by ATP or citrate. In terms of biological role, catalyzes the phosphorylation of D-fructose 6-phosphate to fructose 1,6-bisphosphate by ATP, the first committing step of glycolysis. The sequence is that of ATP-dependent 6-phosphofructokinase, muscle type (PFKM) from Equus caballus (Horse).